Consider the following 317-residue polypeptide: Small ribosomal subunit protein uS2 (317 aa).

Positions 277 to 317 are disordered; it reads SDWTAPAANPANAAAAGAPAPAPAAATTTESWGGSGAENWG. Residues 281 to 302 are compositionally biased toward low complexity; that stretch reads APAANPANAAAAGAPAPAPAAA.

It belongs to the universal ribosomal protein uS2 family. As to quaternary structure, component of the small ribosomal subunit. Mature ribosomes consist of a small (40S) and a large (60S) subunit. The 40S subunit contains about 33 different proteins and 1 molecule of RNA (18S). The 60S subunit contains about 49 different proteins and 3 molecules of RNA (28S, 5.8S and 5S). Interacts with ribosomal protein S21.

It is found in the cytoplasm. In terms of biological role, required for the assembly and/or stability of the 40S ribosomal subunit. Required for the processing of the 20S rRNA-precursor to mature 18S rRNA in a late step of the maturation of 40S ribosomal subunits. This Urechis caupo (Innkeeper worm) protein is Small ribosomal subunit protein uS2.